The chain runs to 137 residues: Small ribosomal subunit protein uS11 (137 aa).

The tract at residues 1 to 30 is disordered; the sequence is MAQAKKGGAPKKGQKTRRREKKNVPHGAAH. Basic residues predominate over residues 8-21; the sequence is GAPKKGQKTRRREK.

The protein belongs to the universal ribosomal protein uS11 family. Part of the 30S ribosomal subunit. Interacts with proteins S7 and S18. Binds to IF-3.

Functionally, located on the platform of the 30S subunit, it bridges several disparate RNA helices of the 16S rRNA. Forms part of the Shine-Dalgarno cleft in the 70S ribosome. The polypeptide is Small ribosomal subunit protein uS11 (Mycolicibacterium vanbaalenii (strain DSM 7251 / JCM 13017 / BCRC 16820 / KCTC 9966 / NRRL B-24157 / PYR-1) (Mycobacterium vanbaalenii)).